Consider the following 232-residue polypeptide: Ubiquinone biosynthesis O-methyltransferase (232 aa).

4 residues coordinate S-adenosyl-L-methionine: Arg36, Gly55, Asp76, and Met120.

It belongs to the methyltransferase superfamily. UbiG/COQ3 family.

The catalysed reaction is a 3-demethylubiquinol + S-adenosyl-L-methionine = a ubiquinol + S-adenosyl-L-homocysteine + H(+). The enzyme catalyses a 3-(all-trans-polyprenyl)benzene-1,2-diol + S-adenosyl-L-methionine = a 2-methoxy-6-(all-trans-polyprenyl)phenol + S-adenosyl-L-homocysteine + H(+). It functions in the pathway cofactor biosynthesis; ubiquinone biosynthesis. O-methyltransferase that catalyzes the 2 O-methylation steps in the ubiquinone biosynthetic pathway. In Burkholderia mallei (strain ATCC 23344), this protein is Ubiquinone biosynthesis O-methyltransferase.